A 513-amino-acid chain; its full sequence is Histidine ammonia-lyase (513 aa).

Positions alanine 143–glycine 145 form a cross-link, 5-imidazolinone (Ala-Gly). Serine 144 is modified (2,3-didehydroalanine (Ser)).

Belongs to the PAL/histidase family. Post-translationally, contains an active site 4-methylidene-imidazol-5-one (MIO), which is formed autocatalytically by cyclization and dehydration of residues Ala-Ser-Gly.

It localises to the cytoplasm. It catalyses the reaction L-histidine = trans-urocanate + NH4(+). Its pathway is amino-acid degradation; L-histidine degradation into L-glutamate; N-formimidoyl-L-glutamate from L-histidine: step 1/3. The chain is Histidine ammonia-lyase from Xanthomonas axonopodis pv. citri (strain 306).